A 443-amino-acid chain; its full sequence is KH domain-containing, RNA-binding, signal transduction-associated protein 1 (443 aa).

A disordered region spans residues 1–95; the sequence is MQRRDDPAAR…LLPPSATAAA (95 aa). Phosphoserine occurs at positions 18 and 20. K21 carries the post-translational modification N6-acetyllysine. Residue S29 is modified to Phosphoserine. T33 is modified (phosphothreonine). Asymmetric dimethylarginine; by PRMT1 is present on residues R45 and R52. At S58 the chain carries Phosphoserine. The span at 61 to 72 shows a compositional bias: pro residues; that stretch reads TQPPPLLPPSNP. Low complexity predominate over residues 81–95; it reads SAPTPLLPPSATAAA. Residue T84 is modified to Phosphothreonine; by MAPK1. Residues K96 and K102 each participate in a glycyl lysine isopeptide (Lys-Gly) (interchain with G-Cter in SUMO2) cross-link. The involved in homodimerization stretch occupies residues 100-260; that stretch reads ENKYLPELMA…VKKFLVPDMM (161 aa). S113 bears the Phosphoserine mark. K139 participates in a covalent cross-link: Glycyl lysine isopeptide (Lys-Gly) (interchain with G-Cter in SUMO2). S150 carries the post-translational modification Phosphoserine. One can recognise a KH domain in the interval 171 to 197; it reads NFVGKILGPQGNTIKRLQEETGAKISV. Position 175 is an N6-acetyllysine; alternate (K175). K175 is covalently cross-linked (Glycyl lysine isopeptide (Lys-Gly) (interchain with G-Cter in SUMO2); alternate). The residue at position 183 (T183) is a Phosphothreonine. The tract at residues 280–317 is disordered; sequence PSRGRGVSVRGRGAAPPPPPVPRGRGVGPPRGALVRGT. Residues R282, R284, and R291 each carry the omega-N-methylarginine modification. The segment covering 283–293 has biased composition (low complexity); that stretch reads GRGVSVRGRGA. An Asymmetric dimethylarginine; by PRMT1 modification is found at R304. Residues 307 to 316 show a composition bias toward low complexity; the sequence is GPPRGALVRG. Residues R310 and R315 each carry the omega-N-methylarginine; by PRMT1 modification. R320 is modified (dimethylated arginine; alternate). R320 carries the omega-N-methylarginine; by PRMT1; alternate modification. Position 325 is an omega-N-methylarginine; by PRMT1 (R325). A disordered region spans residues 326–345; that stretch reads GATVTRGVPPPPTVRGAPTP. 2 positions are modified to dimethylated arginine; alternate: R331 and R340. Omega-N-methylarginine; by PRMT1; alternate is present on residues R331 and R340. R331 carries the asymmetric dimethylarginine; alternate modification. Residues 351–443 are interaction with HNRNPA1; the sequence is GIQRIPLPPT…AYREHPYGRY (93 aa). Residue Y387 is modified to Phosphotyrosine. Residue S390 is modified to Phosphoserine. The interval 400-420 is interaction with ZBTB7A; that stretch reads GHGELQDSYEAYGQDDWNGTR. The tract at residues 411 to 443 is disordered; sequence YGQDDWNGTRPSLKAPPARPVKGAYREHPYGRY. A Glycyl lysine isopeptide (Lys-Gly) (interchain with G-Cter in SUMO2) cross-link involves residue K432. The segment covering 434 to 443 has biased composition (basic and acidic residues); it reads AYREHPYGRY. Y435, Y440, and Y443 each carry phosphotyrosine; by PTK6.

Belongs to the KHDRBS family. As to quaternary structure, self-associates to form homooligomers when bound to RNA, oligomerization appears to be limited when binding to proteins. Interacts with KHDRBS3/SLIM-2. Forms a trimeric complex in the nucleus consisting of BANP, HDAC6 and KHDRBS1/SAM68; HDAC6 keeps KHDRBS1 in a deacetylated state which inhibits the inclusion of CD44 alternate exons. The complex is disrupted by MAPK1/MAPK3-mediated phosphorylation of BANP which results in BANP export to the cytoplasm. This facilitates acetylation of KHDRBS1 and CD44 variant exon inclusion. Interacts with KHDRBS2/SLIM-1; heterooligomer formation of KHDRBS family proteins may modulate RNA substrate specificity. Interacts with PIK3R1, PLCG1. Interacts with RASA1, GRB2, SRC, CBP, PRMT1, APC, HNRNPA1. Interacts with PTK6 (via SH3 and SH2 domains). Forms a complex with ILF2, ILF3, YLPM1, RBMX, NCOA5 and PPP1CA. Binds WBP4/FBP21 (via WW domains), FNBP4/FBP30 (via WW domains). Interacts (via Arg/Gly-rich-flanked Pro-rich regions) with FYN (via the SH3 domain). Interacts with the non-receptor tyrosine kinase SRMS; the interaction leads to phosphorylation of KHDRBS1. Interacts with ZBTB7A; negatively regulates KHDRBS1 splicing activity toward BCL2L1. In terms of processing, tyrosine phosphorylated by several non-receptor tyrosine kinases including LCK, FYN and JAK3. Also tyrosine phosphorylated by the non-receptor tyrosine kinase SRMS in an EGF-dependent manner. Phosphorylation by PTK6 negatively regulates its RNA binding ability. Phosphorylation by PTK6 at Tyr-440 dictates the nuclear localization of KHDRBS1. Acetylated. Positively correlates with ability to bind RNA. Deacetylated by HDAC6; this regulates alternative splicing by inhibiting the inclusion of CD44 alternate exons. Post-translationally, arginine methylation is required for nuclear localization, Inhibits interaction with Src-like SH3 domains, but not interaction with WW domains of WBP4/FBP21 and FNBP4/FBP30.

It localises to the nucleus. The protein localises to the cytoplasm. Its subcellular location is the membrane. Functionally, recruited and tyrosine phosphorylated by several receptor systems, for example the T-cell, leptin and insulin receptors. Once phosphorylated, functions as an adapter protein in signal transduction cascades by binding to SH2 and SH3 domain-containing proteins. Role in G2-M progression in the cell cycle. Represses CBP-dependent transcriptional activation apparently by competing with other nuclear factors for binding to CBP. Also acts as a putative regulator of mRNA stability and/or translation rates and mediates mRNA nuclear export. Positively regulates the association of constitutive transport element (CTE)-containing mRNA with large polyribosomes and translation initiation. May not be involved in the nucleocytoplasmic export of unspliced (CTE)-containing RNA species. RNA-binding protein that plays a role in the regulation of alternative splicing and influences mRNA splice site selection and exon inclusion. Binds to RNA containing 5'-[AU]UAA-3' as a bipartite motif spaced by more than 15 nucleotides. Binds poly(A). Can regulate CD44 alternative splicing in a Ras pathway-dependent manner. In cooperation with HNRNPA1 modulates alternative splicing of BCL2L1 by promoting splicing toward isoform Bcl-X(S), and of SMN1. Can regulate alternative splicing of NRXN1 and NRXN3 in the laminin G-like domain 6 containing the evolutionary conserved neurexin alternative spliced segment 4 (AS4) involved in neurexin selective targeting to postsynaptic partners. In a neuronal activity-dependent manner cooperates synergistically with KHDRBS2/SLIM-1 in regulation of NRXN1 exon skipping at AS4. The cooperation with KHDRBS2/SLIM-1 is antagonistic for regulation of NXRN3 alternative splicing at AS4. This Rattus norvegicus (Rat) protein is KH domain-containing, RNA-binding, signal transduction-associated protein 1.